The primary structure comprises 459 residues: FBD-associated F-box protein At5g27750 (459 aa).

In terms of domain architecture, F-box spans 4-50 (FDRISELPESLITQILLCLPTKDSVKTSVLSTRWKNLWLNVPGLDLT). The 53-residue stretch at 374–426 (TEELNLINVPRCIVSTLECVEIKGLFEWEEEEMKIARYFLENAAVLKKLTMSF) folds into the FBD domain.

The sequence is that of FBD-associated F-box protein At5g27750 from Arabidopsis thaliana (Mouse-ear cress).